Here is a 636-residue protein sequence, read N- to C-terminus: 1-deoxy-D-xylulose-5-phosphate synthase (636 aa).

Residues His74 and 115-117 (GHA) contribute to the thiamine diphosphate site. Asp146 contacts Mg(2+). Thiamine diphosphate contacts are provided by residues 147-148 (GA), Asn175, Tyr285, and Glu368. Mg(2+) is bound at residue Asn175.

The protein belongs to the transketolase family. DXPS subfamily. In terms of assembly, homodimer. Mg(2+) is required as a cofactor. The cofactor is thiamine diphosphate.

It carries out the reaction D-glyceraldehyde 3-phosphate + pyruvate + H(+) = 1-deoxy-D-xylulose 5-phosphate + CO2. Its pathway is metabolic intermediate biosynthesis; 1-deoxy-D-xylulose 5-phosphate biosynthesis; 1-deoxy-D-xylulose 5-phosphate from D-glyceraldehyde 3-phosphate and pyruvate: step 1/1. Functionally, catalyzes the acyloin condensation reaction between C atoms 2 and 3 of pyruvate and glyceraldehyde 3-phosphate to yield 1-deoxy-D-xylulose-5-phosphate (DXP). In Anaeromyxobacter sp. (strain K), this protein is 1-deoxy-D-xylulose-5-phosphate synthase.